Reading from the N-terminus, the 62-residue chain is Small ribosomal subunit protein bS21 (62 aa).

A disordered region spans residues 38 to 62 (YEKPSERRKRKMNAAVRKNRRTRHG).

The protein belongs to the bacterial ribosomal protein bS21 family.

In Gemmatimonas aurantiaca (strain DSM 14586 / JCM 11422 / NBRC 100505 / T-27), this protein is Small ribosomal subunit protein bS21.